The chain runs to 3473 residues: AP2/ERF domain-containing protein PFD0985w (3473 aa).

Disordered stretches follow at residues 35 to 61 (NNIIQEDPNNGHNDNINNNDINNNNNN), 366 to 450 (KMER…HLVC), 647 to 704 (NNNN…INAK), 750 to 801 (NIIK…RKKK), 1096 to 1196 (VDNN…MNMN), 1300 to 1328 (DNTSISLRNKRSRDVGSNQNCDHNNNSRG), 1388 to 1418 (HLRSSNPQSTDNYSSEEYMQRSSMRTRGAER), 1773 to 1807 (NNTGTTQNNNKYGTNSNNNNNNNNNNNNNNNNNKV), and 1864 to 1898 (IGEDDDKKNTSDNDLTSLKRRKNGNSKRAKSNNLS). Composition is skewed to low complexity over residues 44–61 (NGHNDNINNNDINNNNNN), 396–442 (NNND…NSNN), and 647–666 (NNNNNINCGDDGNNNNNNNN). Over residues 683 to 694 (TGDKHETSKKED) the composition is skewed to basic and acidic residues. Low complexity predominate over residues 751-768 (IIKSDNVNNNNNNNNNNN). Basic residues predominate over residues 785 to 801 (NKKHKKKNIHDNNRKKK). Residues 1098 to 1156 (NNNNNNNNNNNNNVNNISNNGTNLEENANNANNANNPNNANNPNNANNSNNADYVNDYN) are compositionally biased toward low complexity. The span at 1160–1171 (KEEDDDDEEEDN) shows a compositional bias: acidic residues. Positions 1182–1196 (TNYNININGENMNMN) are enriched in low complexity. Composition is skewed to polar residues over residues 1314–1326 (VGSNQNCDHNNNS) and 1390–1412 (RSSNPQSTDNYSSEEYMQRSSMR). Residues 1773–1805 (NNTGTTQNNNKYGTNSNNNNNNNNNNNNNNNNN) show a composition bias toward low complexity. Positions 1881–1893 (LKRRKNGNSKRAK) are enriched in basic residues. The segment at residues 1957-2011 (PLPTGVYFDSARKLWRCQWKENGKFKTKGFSLIHYSTLEEARKQCILYRCDVGNI) is a DNA-binding region (AP2/ERF 1). 8 disordered regions span residues 2068–2088 (EKTGVSQGVSTANNNDNNVNN), 2319–2343 (QVDVVGDGSGTQALKRSKRSKSNSK), 2387–2470 (TNDN…NIRS), 2520–2584 (LGNG…NYNN), 2609–2677 (LYGK…PASN), 2840–2860 (MNNNNNNNNNNNNNNNNNNVK), 2881–2902 (NDKLEKEKNGGGGVVSSSSSSP), and 2937–2960 (KYVECGNGDKETNDYNTRRKKKDE). Basic residues predominate over residues 2333 to 2342 (KRSKRSKSNS). 2 stretches are compositionally biased toward low complexity: residues 2388–2400 (NDNNNDGINNNND) and 2409–2460 (DNNN…NNND). Positions 2525-2542 (DGEEEGGGDYDEKEDDLL) are enriched in acidic residues. Composition is skewed to low complexity over residues 2557-2584 (NNNNNNNNNNNNNNNNNNNNNNNNNYNN) and 2615-2624 (NNNNNNNNNN). The segment covering 2663–2675 (LLNSQVNESSAPA) has biased composition (polar residues). Residues 2841–2858 (NNNNNNNNNNNNNNNNNN) show a composition bias toward low complexity. Over residues 2943–2953 (NGDKETNDYNT) the composition is skewed to basic and acidic residues. The segment at residues 3268 to 3321 (SLPKGIYYDHAKKLYRVQYIINNSIKTKGFSVKKLGLAQAKIEAESFRNFCLEN) is a DNA-binding region (AP2/ERF 2). Low complexity predominate over residues 3369–3391 (KMSINNDGNNNDGNNNDGNNNDD). Positions 3369–3473 (KMSINNDGNN…NNDNEMSQNE (105 aa)) are disordered. Acidic residues predominate over residues 3392-3403 (NNNDDNNNDDNN). A compositionally biased stretch (low complexity) spans 3404 to 3457 (NDGNNNDDNNNEGINNDDNNNEGINNDDNNNEGINNNDDNNNNDDNNNEGINND).

It is found in the nucleus. In Plasmodium falciparum (isolate 3D7), this protein is AP2/ERF domain-containing protein PFD0985w.